A 3795-amino-acid polypeptide reads, in one-letter code: NBPF family member NBPF10 (3795 aa).

The stretch at 75-119 (RQFKEEKLAEQLKQAEELRQYKVLVHSQERELTQLREKLREGRDA) forms a coiled coil. The disordered stretch occupies residues 161–200 (KLSPENDEDEDEDVQVEEAEKVLESSAPREVQKAEESKVP). Residues 165–177 (ENDEDEDEDVQVE) are compositionally biased toward acidic residues. An Olduvai 1 domain is found at 165–259 (ENDEDEDEDV…ECQDALNILP (95 aa)). Residues 190-200 (EVQKAEESKVP) show a composition bias toward basic and acidic residues. The stretch at 346–390 (RQFKEEKLAEQLKQAEELRQYKVLVHAQERELTQLKEKLREGRDA) forms a coiled coil. 41 consecutive Olduvai domains span residues 436 to 528 (ENDN…HIIP), 529 to 600 (ENES…VDIG), 601 to 692 (RHRW…PSCP), 695 to 750 (SREL…LDVD), 751 to 843 (RIKK…RSKK), 844 to 936 (ERRR…PSCP), 939 to 994 (SREL…LDVD), 995 to 1087 (RIKK…RSKK), 1088 to 1180 (ERRR…PSCP), 1183 to 1238 (SREL…LDVD), 1239 to 1331 (RIKK…RSKK), 1332 to 1424 (ERRR…PSCP), 1427 to 1482 (SREL…LDVD), 1483 to 1575 (RIKK…RSKK), 1576 to 1668 (ERRR…PSCP), 1671 to 1726 (SREL…LDVD), 1727 to 1819 (RIKK…RSKK), 1820 to 1912 (ERRR…PSCP), 1915 to 1970 (SREL…LDVD), 1971 to 2063 (RIKK…RSKK), 2064 to 2156 (ERRR…PSCP), 2159 to 2214 (SREL…LDVD), 2215 to 2307 (RIKK…RSKK), 2308 to 2400 (ERRR…PSCP), 2403 to 2458 (SREL…LDVD), 2459 to 2551 (RIKK…RSKK), 2552 to 2644 (ERRR…PSCP), 2647 to 2702 (SREL…LDVD), 2703 to 2795 (RIKK…RSKK), 2796 to 2888 (ERRR…PSCP), 2891 to 2946 (SREL…LDVD), 2947 to 3039 (RIKK…RSKK), 3040 to 3132 (ERRR…PSCP), 3135 to 3190 (SREL…LDVD), 3191 to 3283 (RIKK…RSKK), 3284 to 3376 (ERRR…PSCP), 3379 to 3434 (SREL…LDVD), 3435 to 3527 (RIKK…RSKK), 3528 to 3620 (ERRR…PSCP), 3623 to 3696 (SREL…RSKK), and 3697 to 3795 (ERRR…IFPQ). 2 disordered regions span residues 451–475 (EKVQ…EDSL) and 520–566 (WEDA…EGYS). 2 stretches are compositionally biased toward acidic residues: residues 530–539 (NESDDEEEEE) and 550–562 (ESEE…ESWD). The disordered stretch occupies residues 830-868 (KGKGKKRRGRRSKKERRRGRKEGEEDQNPPCPRLSRELL). A compositionally biased stretch (basic residues) spans 831–849 (GKGKKRRGRRSKKERRRGR). A disordered region spans residues 1073-1109 (KKGKGKKRRGRRSKKERRRGRKEGEEDQNPPCPRLSR). The segment covering 1075-1093 (GKGKKRRGRRSKKERRRGR) has biased composition (basic residues). Disordered stretches follow at residues 1242 to 1261 (KDEE…SREL) and 1318 to 1353 (KGKG…RLSR). The span at 1319–1337 (GKGKKRRGRRSKKERRRGR) shows a compositional bias: basic residues. Residues 1562-1600 (KGKGKKRRGRRSKKERRRGRKEGEEDQNPPCPRLSRELL) form a disordered region. The segment covering 1563 to 1581 (GKGKKRRGRRSKKERRRGR) has biased composition (basic residues). The interval 1806-1844 (KGKGKKRRGRRSKKERRRGRKEGEEDQNPPCPRLSRELL) is disordered. The span at 1807–1825 (GKGKKRRGRRSKKERRRGR) shows a compositional bias: basic residues. The segment at 2050–2088 (KGKGKKRRGRRSKKERRRGRKEGEEDQNPPCPRLSRELL) is disordered. Residues 2051–2069 (GKGKKRRGRRSKKERRRGR) are compositionally biased toward basic residues. Residues 2294-2332 (KGKGKKRRGRRSKKERRRGRKEGEEDQNPPCPRLSRELL) form a disordered region. Basic residues predominate over residues 2295–2313 (GKGKKRRGRRSKKERRRGR). The disordered stretch occupies residues 2538–2576 (KGKGKKRRGRRSKKERRRGRKEGEEDQNPPCPRLSRELL). Over residues 2539–2557 (GKGKKRRGRRSKKERRRGR) the composition is skewed to basic residues. Positions 2782–2820 (KGKGKKRRGRRSKKERRRGRKEGEEDQNPPCPRLSRELL) are disordered. Positions 2783 to 2801 (GKGKKRRGRRSKKERRRGR) are enriched in basic residues. Residues 3026 to 3064 (KGKGKKRRGRRSKKERRRGRKEGEEDQNPPCPRLSRELL) are disordered. Positions 3027–3045 (GKGKKRRGRRSKKERRRGR) are enriched in basic residues. Disordered regions lie at residues 3194–3213 (KDEE…SREL) and 3270–3308 (KGKG…RELL). Over residues 3271–3289 (GKGKKRRGRRSKKERRRGR) the composition is skewed to basic residues. Disordered stretches follow at residues 3514–3552 (KGKG…RELL) and 3684–3716 (GKGK…CPRL). Composition is skewed to basic residues over residues 3515-3533 (GKGK…RRGR) and 3684-3702 (GKGK…RRGR).

Belongs to the NBPF family.

It is found in the cytoplasm. This is NBPF family member NBPF10 from Homo sapiens (Human).